An 89-amino-acid chain; its full sequence is UPF0147 protein TV0625 (89 aa).

Belongs to the UPF0147 family.

This chain is UPF0147 protein TV0625, found in Thermoplasma volcanium (strain ATCC 51530 / DSM 4299 / JCM 9571 / NBRC 15438 / GSS1).